We begin with the raw amino-acid sequence, 69 residues long: ATP synthase protein 8 (69 aa).

The helical transmembrane segment at 8 to 24 (TWTLTISLMIISLFCIY) threads the bilayer. N6-acetyllysine; alternate is present on Lys-55. Residue Lys-55 is modified to N6-succinyllysine; alternate. N6-acetyllysine is present on Lys-58.

This sequence belongs to the ATPase protein 8 family. In terms of assembly, F-type ATPases have 2 components, CF(1) - the catalytic core - and CF(0) - the membrane proton channel. Component of an ATP synthase complex composed of ATP5PB, ATP5MC1, ATP5F1E, ATP5PD, ATP5ME, ATP5PF, ATP5MF, MT-ATP6, MT-ATP8, ATP5F1A, ATP5F1B, ATP5F1D, ATP5F1C, ATP5PO, ATP5MG, ATP5MK and ATP5MJ. Interacts with PRICKLE3.

It localises to the mitochondrion membrane. Functionally, mitochondrial membrane ATP synthase (F(1)F(0) ATP synthase or Complex V) produces ATP from ADP in the presence of a proton gradient across the membrane which is generated by electron transport complexes of the respiratory chain. F-type ATPases consist of two structural domains, F(1) - containing the extramembraneous catalytic core and F(0) - containing the membrane proton channel, linked together by a central stalk and a peripheral stalk. During catalysis, ATP synthesis in the catalytic domain of F(1) is coupled via a rotary mechanism of the central stalk subunits to proton translocation. Part of the complex F(0) domain. Minor subunit located with subunit a in the membrane. The sequence is that of ATP synthase protein 8 (MT-ATP8) from Didelphis virginiana (North American opossum).